Reading from the N-terminus, the 210-residue chain is Orotate phosphoribosyltransferase (210 aa).

Residues arginine 94, lysine 98, histidine 100, and 120-128 each bind 5-phospho-alpha-D-ribose 1-diphosphate; that span reads EDLISTGGS. An orotate-binding site is contributed by serine 124.

Belongs to the purine/pyrimidine phosphoribosyltransferase family. PyrE subfamily. In terms of assembly, homodimer. Mg(2+) serves as cofactor.

It catalyses the reaction orotidine 5'-phosphate + diphosphate = orotate + 5-phospho-alpha-D-ribose 1-diphosphate. Its pathway is pyrimidine metabolism; UMP biosynthesis via de novo pathway; UMP from orotate: step 1/2. In terms of biological role, catalyzes the transfer of a ribosyl phosphate group from 5-phosphoribose 1-diphosphate to orotate, leading to the formation of orotidine monophosphate (OMP). This Halalkalibacterium halodurans (strain ATCC BAA-125 / DSM 18197 / FERM 7344 / JCM 9153 / C-125) (Bacillus halodurans) protein is Orotate phosphoribosyltransferase.